A 76-amino-acid polypeptide reads, in one-letter code: Acyl carrier protein (76 aa).

The Carrier domain maps to 1–76 (MSIEERVKKI…SAIDYVQNNQ (76 aa)). O-(pantetheine 4'-phosphoryl)serine is present on Ser-36.

The protein belongs to the acyl carrier protein (ACP) family. 4'-phosphopantetheine is transferred from CoA to a specific serine of apo-ACP by AcpS. This modification is essential for activity because fatty acids are bound in thioester linkage to the sulfhydryl of the prosthetic group.

The protein localises to the cytoplasm. It functions in the pathway lipid metabolism; fatty acid biosynthesis. Functionally, carrier of the growing fatty acid chain in fatty acid biosynthesis. The polypeptide is Acyl carrier protein (Histophilus somni (strain 129Pt) (Haemophilus somnus)).